The primary structure comprises 216 residues: MGNLVIAVDGPAGAGKSTIAKIVAKKLNINYIDTGAMYRAVTYKCLKSGIDVNNEKEVIQIAENSDIDFKDNNIYLDKEVINEEIRTIEVSNNVSNVAKIKEVRQLMVEVQRKIGMKNSVILDGRDIGSYVFPDADYKFFLVATPEERGNRRYKELCNKGYNTTLEEVIEDIIRRDEIDSNREFAPLVKANDALEIDTTGKTIEEVVEEVVSKINL.

10–18 (GPAGAGKST) is an ATP binding site.

This sequence belongs to the cytidylate kinase family. Type 1 subfamily.

Its subcellular location is the cytoplasm. It catalyses the reaction CMP + ATP = CDP + ADP. The enzyme catalyses dCMP + ATP = dCDP + ADP. The sequence is that of Cytidylate kinase from Clostridioides difficile (strain 630) (Peptoclostridium difficile).